Here is a 220-residue protein sequence, read N- to C-terminus: 2-hydroxy-3-keto-5-methylthiopentenyl-1-phosphate phosphatase (220 aa).

This sequence belongs to the HAD-like hydrolase superfamily. MtnX family.

It catalyses the reaction 2-hydroxy-5-methylsulfanyl-3-oxopent-1-enyl phosphate + H2O = 1,2-dihydroxy-5-(methylsulfanyl)pent-1-en-3-one + phosphate. It participates in amino-acid biosynthesis; L-methionine biosynthesis via salvage pathway; L-methionine from S-methyl-5-thio-alpha-D-ribose 1-phosphate: step 4/6. Functionally, dephosphorylates 2-hydroxy-3-keto-5-methylthiopentenyl-1-phosphate (HK-MTPenyl-1-P) yielding 1,2-dihydroxy-3-keto-5-methylthiopentene (DHK-MTPene). The chain is 2-hydroxy-3-keto-5-methylthiopentenyl-1-phosphate phosphatase from Geobacillus thermodenitrificans (strain NG80-2).